Here is a 1787-residue protein sequence, read N- to C-terminus: ATP-dependent RNA helicase DEAH11, chloroplastic (1787 aa).

A chloroplast-targeting transit peptide spans 1–33; the sequence is MRNSFPPSDGGRSTTDRRQQSFPSSSTNRYNSR. The tract at residues 1 to 75 is disordered; it reads MRNSFPPSDG…DRAPSSGFSP (75 aa). Residues 20–60 show a composition bias toward polar residues; it reads QSFPSSSTNRYNSRSAQSSPPLNHCTTWNQQHSQYHNTNFP. Positions 313–477 constitute a Helicase ATP-binding domain; that stretch reads LKKIHCEQIM…LFDCGILHVN (165 aa). 326–333 is a binding site for ATP; it reads GETGSGKS. The DEAH box signature appears at 424–427; that stretch reads DEAH. Residues 507 to 673 enclose the Helicase C-terminal domain; the sequence is DVVKMAVEIH…VALLRMLALG (167 aa). The TRIAD supradomain stretch occupies residues 1557 to 1764; that stretch reads IELECPICLS…EPCYAHLRTI (208 aa). Zn(2+) contacts are provided by Cys-1561, Cys-1564, Cys-1577, His-1579, Cys-1582, Cys-1585, Cys-1604, Cys-1609, Cys-1649, Cys-1654, Cys-1672, Cys-1675, Cys-1680, Cys-1683, His-1688, Cys-1693, Cys-1719, and Cys-1722. The RING-type 1 zinc-finger motif lies at 1561–1609; it reads CPICLSEVDDGYSLEGCSHLFCKACLLEQFEASMRNFDAFPILCSHIDC. The IBR-type zinc-finger motif lies at 1628-1693; it reads DELISASLSA…HLEYHPLITC (66 aa). The segment at 1719–1747 adopts an RING-type 2; atypical zinc-finger fold; sequence CPICKSTIEKTDGCNHLQCRCGKHICWTC. Cys-1732 is a catalytic residue. Cys-1737 and Cys-1739 together coordinate Zn(2+).

It belongs to the DEAD box helicase family. DEAH subfamily.

The protein resides in the plastid. Its subcellular location is the chloroplast. The catalysed reaction is ATP + H2O = ADP + phosphate + H(+). The polypeptide is ATP-dependent RNA helicase DEAH11, chloroplastic (Arabidopsis thaliana (Mouse-ear cress)).